The sequence spans 145 residues: Transcription antitermination protein NusB (145 aa).

The protein belongs to the NusB family.

In terms of biological role, involved in transcription antitermination. Required for transcription of ribosomal RNA (rRNA) genes. Binds specifically to the boxA antiterminator sequence of the ribosomal RNA (rrn) operons. This is Transcription antitermination protein NusB from Acetivibrio thermocellus (strain ATCC 27405 / DSM 1237 / JCM 9322 / NBRC 103400 / NCIMB 10682 / NRRL B-4536 / VPI 7372) (Clostridium thermocellum).